The following is a 172-amino-acid chain: MPRFQKNDNFIDKTFTVLADLVLKILPATKQEKEAFSYYRDGMSAQSEGEYAEALENYYEALRLEEDPYDRSYILYNIGLIYASNGEYVKALEYYHQALDLNSQLPAALNNIAVIYHYQGVKASEKKELDLARTLFDKAAEYWKQAIRLSPNNYIEAQNWLKTTGRSDTLTI.

TPR repeat units follow at residues 35–68, 72–105, and 120–153; these read AFSY…EEDP, SYIL…NSQL, and GVKA…SPNN.

Belongs to the Ycf3 family.

The protein localises to the plastid. It localises to the chloroplast thylakoid membrane. Functionally, essential for the assembly of the photosystem I (PSI) complex. May act as a chaperone-like factor to guide the assembly of the PSI subunits. The polypeptide is Photosystem I assembly protein Ycf3 (Guillardia theta (Cryptophyte)).